The chain runs to 489 residues: Glucose-1-phosphate adenylyltransferase small subunit, chloroplastic/amyloplastic (489 aa).

The N-terminal 52 residues, 1–52 (ITVPSTSSKNLQNSLAFSSSSLSGDKIQTTSFLNRRYCRISSRAPIVVSPKA), are a transit peptide targeting the chloroplast.

It belongs to the bacterial/plant glucose-1-phosphate adenylyltransferase family. In terms of assembly, heterotetramer. Prominently expressed in the leaves. A lower level expression is seen in the roots.

Its subcellular location is the plastid. It is found in the chloroplast. The protein resides in the amyloplast. It carries out the reaction alpha-D-glucose 1-phosphate + ATP + H(+) = ADP-alpha-D-glucose + diphosphate. The protein operates within glycan biosynthesis; starch biosynthesis. Activated by 3'phosphoglycerate, inhibited by orthophosphate. Allosteric regulation. Functionally, this protein plays a role in synthesis of starch. It catalyzes the synthesis of the activated glycosyl donor, ADP-glucose from Glc-1-P and ATP. This is Glucose-1-phosphate adenylyltransferase small subunit, chloroplastic/amyloplastic (AGPB1) from Beta vulgaris (Sugar beet).